The chain runs to 506 residues: COP9 signalosome complex subunit 2 (506 aa).

One can recognise a PCI domain in the interval S252 to D420. A compositionally biased stretch (basic residues) spans S482–K491. Residues S482–F506 are disordered. The span at G492 to F506 shows a compositional bias: gly residues.

The protein belongs to the CSN2 family. As to quaternary structure, component of the COP9 signalosome (CSN) complex.

The protein resides in the cytoplasm. Its subcellular location is the nucleus. Its function is as follows. Component of the COP9 signalosome (CSN) complex that acts as an regulator of the ubiquitin (Ubl) conjugation pathway by mediating the deneddylation of the cullin subunit of SCF-type E3 ubiquitin-protein ligase complexes. The CSN complex seems to link protein degradation to sexual development. Required for fruit body formation. The sequence is that of COP9 signalosome complex subunit 2 (csnB) from Emericella nidulans (strain FGSC A4 / ATCC 38163 / CBS 112.46 / NRRL 194 / M139) (Aspergillus nidulans).